Consider the following 230-residue polypeptide: Large ribosomal subunit protein uL1 (230 aa).

The protein belongs to the universal ribosomal protein uL1 family. Part of the 50S ribosomal subunit.

Binds directly to 23S rRNA. The L1 stalk is quite mobile in the ribosome, and is involved in E site tRNA release. In terms of biological role, protein L1 is also a translational repressor protein, it controls the translation of the L11 operon by binding to its mRNA. The protein is Large ribosomal subunit protein uL1 of Staphylococcus aureus (strain N315).